The following is a 405-amino-acid chain: Serine/threonine-protein kinase 2 (405 aa).

The Protein kinase domain maps to 54–405 (NDDFYHISTG…IFSDWINGGN (352 aa)). Residues 60–68 (ISTGGYGIV) and K84 each bind ATP. Catalysis depends on D274, which acts as the Proton acceptor.

Belongs to the protein kinase superfamily. Ser/Thr protein kinase family. Poxviruses subfamily. In terms of processing, phosphorylated in vivo. Autophosphorylated in vitro.

The protein localises to the host endoplasmic reticulum. The protein resides in the host endoplasmic reticulum-Golgi intermediate compartment. The catalysed reaction is L-seryl-[protein] + ATP = O-phospho-L-seryl-[protein] + ADP + H(+). It catalyses the reaction L-threonyl-[protein] + ATP = O-phospho-L-threonyl-[protein] + ADP + H(+). Its function is as follows. Essential serine-protein kinase involved in the early stage of virion morphogenesis. The protein is Serine/threonine-protein kinase 2 (OPG054) of Vaccinia virus (strain L-IVP) (VACV).